The following is a 72-amino-acid chain: Large ribosomal subunit protein bL31 (72 aa).

The Zn(2+) site is built by C16, C18, C37, and C40.

This sequence belongs to the bacterial ribosomal protein bL31 family. Type A subfamily. In terms of assembly, part of the 50S ribosomal subunit. Zn(2+) is required as a cofactor.

In terms of biological role, binds the 23S rRNA. This is Large ribosomal subunit protein bL31 from Buchnera aphidicola subsp. Schizaphis graminum (strain Sg).